Here is a 1050-residue protein sequence, read N- to C-terminus: Bifunctional glutamine synthetase adenylyltransferase/adenylyl-removing enzyme (1050 aa).

The tract at residues 1–531 (MTDPLIHTRK…LHSQLFYRPL (531 aa)) is adenylyl removase. An adenylyl transferase region spans residues 537–1050 (NLSVDAMKLS…LDSVEARREL (514 aa)).

It belongs to the GlnE family. Requires Mg(2+) as cofactor.

The enzyme catalyses [glutamine synthetase]-O(4)-(5'-adenylyl)-L-tyrosine + phosphate = [glutamine synthetase]-L-tyrosine + ADP. It catalyses the reaction [glutamine synthetase]-L-tyrosine + ATP = [glutamine synthetase]-O(4)-(5'-adenylyl)-L-tyrosine + diphosphate. Its function is as follows. Involved in the regulation of glutamine synthetase GlnA, a key enzyme in the process to assimilate ammonia. When cellular nitrogen levels are high, the C-terminal adenylyl transferase (AT) inactivates GlnA by covalent transfer of an adenylyl group from ATP to specific tyrosine residue of GlnA, thus reducing its activity. Conversely, when nitrogen levels are low, the N-terminal adenylyl removase (AR) activates GlnA by removing the adenylyl group by phosphorolysis, increasing its activity. The regulatory region of GlnE binds the signal transduction protein PII (GlnB) which indicates the nitrogen status of the cell. The sequence is that of Bifunctional glutamine synthetase adenylyltransferase/adenylyl-removing enzyme from Corynebacterium efficiens (strain DSM 44549 / YS-314 / AJ 12310 / JCM 11189 / NBRC 100395).